The chain runs to 72 residues: Large ribosomal subunit protein uL29 (72 aa).

Belongs to the universal ribosomal protein uL29 family.

The protein is Large ribosomal subunit protein uL29 of Prochlorococcus marinus subsp. pastoris (strain CCMP1986 / NIES-2087 / MED4).